A 395-amino-acid chain; its full sequence is S-adenosylmethionine synthase 3 (395 aa).

A Mg(2+)-binding site is contributed by E10. Residue H16 participates in ATP binding. Residue E44 coordinates K(+). E57 and Q100 together coordinate L-methionine. Residues 168-170, 236-239, D247, 253-254, A270, K274, and K278 contribute to the ATP site; these read DGK, SGRF, and RK. An L-methionine-binding site is contributed by D247. K278 is a binding site for L-methionine.

Belongs to the AdoMet synthase family. As to quaternary structure, homotetramer. Mn(2+) is required as a cofactor. Mg(2+) serves as cofactor. The cofactor is Co(2+). It depends on K(+) as a cofactor.

It is found in the cytoplasm. It carries out the reaction L-methionine + ATP + H2O = S-adenosyl-L-methionine + phosphate + diphosphate. Its pathway is amino-acid biosynthesis; S-adenosyl-L-methionine biosynthesis; S-adenosyl-L-methionine from L-methionine: step 1/1. Its function is as follows. Catalyzes the formation of S-adenosylmethionine from methionine and ATP. The reaction comprises two steps that are both catalyzed by the same enzyme: formation of S-adenosylmethionine (AdoMet) and triphosphate, and subsequent hydrolysis of the triphosphate. The protein is S-adenosylmethionine synthase 3 (METK3) of Populus trichocarpa (Western balsam poplar).